Consider the following 383-residue polypeptide: Trihelix transcription factor ASIL1 (383 aa).

Disordered stretches follow at residues 1–32 (MEDD…LPTN), 61–94 (HTPS…DDCW), 189–295 (IASS…SGVG), and 346–383 (EITQ…NVSS). The span at 66–88 (TGGGGSGNRNGRGGGGGSGGGGG) shows a compositional bias: gly residues. The 60-residue stretch at 94–153 (WSEEATKVLIEAWGDRFSEPGKGTLKQQHWKEVAEIVNKSRQCKYPKTDIQCKNRIDTVK) folds into the Myb-like domain. Polar residues predominate over residues 206 to 225 (NSRSSMFKRQTKGNQIVQQQ). Over residues 226–235 (QEKRGSDSMR) the composition is skewed to basic and acidic residues. A Bipartite nuclear localization signal motif is present at residues 228–241 (KRGSDSMRWHFRKR). A compositionally biased stretch (acidic residues) spans 246-262 (TESESDPEPEASPEESA). Positions 263 to 274 (ESLPPLQPIQPL) are enriched in low complexity. Positions 304-365 (FTEAYEKAET…ERSRQRGERR (62 aa)) form a coiled coil. The span at 356-367 (ERSRQRGERRIV) shows a compositional bias: basic and acidic residues.

The protein localises to the nucleus. Transcription repressor that binds specific DNA sequence such as the GT-box-like motif 5'-CGTGATT-3' in the AT2S3 promoter. Negative regulator of seed maturation genes during seed germination and seedling development. May target GT-box-containing embryonic genes by competing with the binding of transcriptional activators to this promoter region. Contributes to the maintenance and control of seed filling and may repress the maturation program during early embryogenesis. In Arabidopsis thaliana (Mouse-ear cress), this protein is Trihelix transcription factor ASIL1.